The primary structure comprises 1486 residues: MIERGKFRSLTLINWNGFFARTFDLDELVTTLSGGNGAGKSTTMAAFVTALIPDLTLLHFRNTTEAGATSGSRDKGLHGKLKAGVCYSMLDTINSRHQRVVVGVRLQQVAGRDRKVDIKPFAIQGLPMSVQPTQLVTETLSERQARVLPLNELKDKLEAMEGVQFKQFNSITDYHSLMFDLGIIARRLRSASDRSKFYRLIEASLYGGISSAITRSLRDYLLPENSGVRKAFQDMEAALRENRMTLEAIRVTQSDRDLFKHLISEATNYVAADYMRHANERRVHLDKALEFRRELHTSRQQLAAEQYKHVDMARELAEHNGAEGDLEADYQAASDHLNLVQTALRQQEKIERYEADLDELQIRLEEQNEVVAEAIERQEENEARAEAAELEVDELKSQLADYQQALDVQQTRAIQYNQAIAALNRAKELCHLPDLTADSAAEWLETFQAKELEATEKMLSLEQKMSMAQTAHSQFEQAYQLVVAINGPLARNEAWDVARELLREGVDQRHLAEQVQPLRMRLSELEQRLREQQEAERLLADFCKRQGKNFDIDELEALHQELEARIASLSDSVSNAREERMTLRQEQEQLQSRIQSLMRRAPVWLAAQNSLNQLSEQCGEEFSSSQDVTEYLQQLLEREREAIVERDEVGARKNAVDEEIERLSQPGGSEDQRLNALAERFGGVLLSEIYDDVSLEDAPYFSALYGPSRHAIVVPDLSQVTEHLEGLTDCPEDLYLIEGDPQSFDDSVFSVDELEKAVVVKIADRQWRYSRFPEVPLFGRAARESRIESLHAEREVLSERFATLSFDVQKTQRLHQAFSRFIGSHLAVAFESDPEAEIRQLNSRRVELERALSNHENDNQQQRIQFEQAKEGVTALNRILPRLNLLADDSLADRVDEIRERLDEAQEAARFVQQFGNQLAKLEPIVSVLQSDPEQFEQLKEDYAYSQQMQRDARQQAFALTEVVQRRAHFSYSDSAEMLSGNSDLNEKLRERLEQAEAERTRAREALRGHAAQLSQYNQVLASLKSSYDTKKELLNDLQRELQDIGVRADSGAEERARIRRDELHAQLSNNRSRRNQLEKALTFCEAEMDNLTRKLRKLERDYFEMREQVVTAKAGWCAVMRMVKDNGVERRLHRRELAYLSADDLRSMSDKALGALRLAVADNEHLRDVLRMSEDPKRPERKIQFFVAVYQHLRERIRQDIIRTDDPVEAIEQMEIELSRLTEELTSREQKLAISSRSVANIIRKTIQREQNRIRMLNQGLQSVSFGQVNSVRLNVNVRETHAMLLDVLSEQHEQHQDLFNSNRLTFSEALAKLYQRLNPQIDMGQRTPQTIGEELLDYRNYLEMEVEVNRGSDGWLRAESGALSTGEAIGTGMSILVMVVQSWEDESRRLRGKDISPCRLLFLDEAARLDARSIATLFELCERLQMQLIIAAPENISPEKGTTYKLVRKVFQNTEHVHVVGLRGFAPQLPETLPGTDEAPSQAS.

34-41 is an ATP binding site; the sequence is GGNGAGKS. Coiled coils occupy residues 326-418, 444-480, and 509-603; these read LEAD…QYNQ, LETF…QAYQ, and RHLA…RAPV. Positions 666-783 are flexible hinge; sequence PGGSEDQRLN…EVPLFGRAAR (118 aa). Coiled-coil stretches lie at residues 835-923, 977-1115, and 1209-1265; these read EAEI…AKLE, EMLS…TAKA, and VEAI…LQSV.

The protein belongs to the SMC family. MukB subfamily. Homodimerization via its hinge domain. Binds to DNA via its C-terminal region. Interacts, and probably forms a ternary complex, with MukE and MukF via its C-terminal region. The complex formation is stimulated by calcium or magnesium. Interacts with tubulin-related protein FtsZ.

The protein resides in the cytoplasm. The protein localises to the nucleoid. Plays a central role in chromosome condensation, segregation and cell cycle progression. Functions as a homodimer, which is essential for chromosome partition. Involved in negative DNA supercoiling in vivo, and by this means organize and compact chromosomes. May achieve or facilitate chromosome segregation by condensation DNA from both sides of a centrally located replisome during cell division. In Escherichia coli O7:K1 (strain IAI39 / ExPEC), this protein is Chromosome partition protein MukB.